Consider the following 366-residue polypeptide: Palmitoyltransferase ZDHHC2 (366 aa).

Over 1-15 the chain is Cytoplasmic; it reads MAPSGPGGVRRRCRR. A helical transmembrane segment spans residues 16 to 36; that stretch reads VLYWIPVVFISLLLGWSYYAY. Topologically, residues 37-47 are lumenal; it reads AIQLCIVSMEN. The chain crosses the membrane as a helical span at residues 48-68; it reads IGEQVVCLMAYHLLFAMFVWS. At 69–169 the chain is on the cytoplasmic side; it reads YWKTIFTLPM…NNCVGFSNYK (101 aa). The DHHC domain maps to 126–176; sequence RYCDRCRLIKPDRCHHCSVCDKCILKMDHHCPWVNNCVGFSNYKFFLLFLA. The S-palmitoyl cysteine intermediate role is filled by C156. Residues 170–190 traverse the membrane as a helical segment; sequence FFLLFLAYSLLYCLFIAATDL. Topologically, residues 191 to 207 are lumenal; sequence QYFIRFWTNGLPDTQAK. Residues 208–228 form a helical membrane-spanning segment; it reads FHIMFLFFAAAMFSVSLSSLF. The Cytoplasmic portion of the chain corresponds to 229-366; sequence GYHCWLVSKN…NPALTMENET (138 aa). Composition is skewed to polar residues over residues 297 to 316 and 332 to 349; these read VNQD…TAKN and SHLL…SNSG. The segment at 297 to 366 is disordered; the sequence is VNQDPEQPST…NPALTMENET (70 aa). A mediates localization to plasma membrane and recycling endosomes region spans residues 298–366; it reads NQDPEQPSTP…NPALTMENET (69 aa). The short motif at 334-335 is the Non-canonical dileucine endocytic signal element; sequence LL. The NPxY-like endocytic signal motif lies at 357 to 360; it reads NPAL.

The protein belongs to the DHHC palmitoyltransferase family. Monomer. Homodimer. The monomeric form has a higher catalytic activity. Autopalmitoylated.

Its subcellular location is the postsynaptic density. The protein localises to the postsynaptic recycling endosome membrane. The protein resides in the cell membrane. It localises to the endoplasmic reticulum membrane. It is found in the golgi apparatus membrane. The enzyme catalyses L-cysteinyl-[protein] + hexadecanoyl-CoA = S-hexadecanoyl-L-cysteinyl-[protein] + CoA. It carries out the reaction L-cysteinyl-[protein] + tetradecanoyl-CoA = S-tetradecanoyl-L-cysteinyl-[protein] + CoA. The catalysed reaction is L-cysteinyl-[protein] + octadecanoyl-CoA = S-octadecanoyl-L-cysteinyl-[protein] + CoA. In terms of biological role, palmitoyltransferase that catalyzes the addition of palmitate onto various protein substrates and is involved in a variety of cellular processes. Has no stringent fatty acid selectivity and in addition to palmitate can also transfer onto target proteins myristate from tetradecanoyl-CoA and stearate from octadecanoyl-CoA. In the nervous system, plays a role in long term synaptic potentiation by palmitoylating AKAP5 through which it regulates protein trafficking from the dendritic recycling endosomes to the plasma membrane and controls both structural and functional plasticity at excitatory synapses. In dendrites, mediates the palmitoylation of DLG4 when synaptic activity decreases and induces synaptic clustering of DLG4 and associated AMPA-type glutamate receptors. Also mediates the de novo and turnover palmitoylation of RGS7BP, a shuttle for Gi/o-specific GTPase-activating proteins/GAPs, promoting its localization to the plasma membrane in response to the activation of G protein-coupled receptors. Through the localization of these GTPase-activating proteins/GAPs, it also probably plays a role in G protein-coupled receptors signaling in neurons. Also probably plays a role in cell adhesion by palmitoylating CD9 and CD151 to regulate their expression and function. Palmitoylates the endoplasmic reticulum protein CKAP4 and regulates its localization to the plasma membrane. Could also palmitoylate LCK and regulate its localization to the plasma membrane. This chain is Palmitoyltransferase ZDHHC2, found in Rattus norvegicus (Rat).